The chain runs to 399 residues: Probable sugar efflux transporter (399 aa).

The next 12 helical transmembrane spans lie at 15 to 35 (VVTLAIAAFIFNTTEFAPVGL), 50 to 70 (VGMMLTIYAWVVALMSLPFML), 81 to 101 (LIGLFILFIASHVLSFFAWNF), 103 to 123 (VLVISRIGIAFAHAVFWSITS), 136 to 156 (AQALSLIATGTALAMVFGIPI), 168 to 188 (MTFLAIGLGALATLACLVKLL), 209 to 229 (PALVSVYILTVVVVTAHYTAY), 246 to 266 (FATVLLLILGGAGIIGSILFG), 273 to 293 (ASGLISLAIALLLACLLLLLP), 301 to 321 (LMLLSIFWGVAIMIIGLGMQV), 333 to 353 (VAMSLFSGIFNIGIGAGALVG), and 364 to 384 (SVGYVGAIPALVALVWSLMIF).

It belongs to the major facilitator superfamily. SotB (TC 2.A.1.2) family.

It is found in the cell inner membrane. Its function is as follows. Involved in the efflux of sugars. The physiological role may be the reduction of the intracellular concentration of toxic sugars or sugar metabolites. This is Probable sugar efflux transporter from Klebsiella pneumoniae subsp. pneumoniae (strain ATCC 700721 / MGH 78578).